Consider the following 457-residue polypeptide: Transcription termination factor Rho (457 aa).

Residues 1–23 are disordered; it reads MNTTNKQLTEELNNTESNNDHND. In terms of domain architecture, Rho RNA-BD spans 77-152; sequence LIVGEGVLEV…LKVNRVNFED (76 aa). ATP is bound by residues 200-205, 212-217, and R243; these read GKGQRA and RTGKTV.

It belongs to the Rho family. As to quaternary structure, homohexamer. The homohexamer assembles into an open ring structure.

In terms of biological role, facilitates transcription termination by a mechanism that involves Rho binding to the nascent RNA, activation of Rho's RNA-dependent ATPase activity, and release of the mRNA from the DNA template. This Rickettsia prowazekii (strain Madrid E) protein is Transcription termination factor Rho.